The following is a 345-amino-acid chain: Phenylalanine--tRNA ligase alpha subunit (345 aa).

Glu-255 provides a ligand contact to Mg(2+).

It belongs to the class-II aminoacyl-tRNA synthetase family. Phe-tRNA synthetase alpha subunit type 1 subfamily. Tetramer of two alpha and two beta subunits. Mg(2+) is required as a cofactor.

Its subcellular location is the cytoplasm. The enzyme catalyses tRNA(Phe) + L-phenylalanine + ATP = L-phenylalanyl-tRNA(Phe) + AMP + diphosphate + H(+). The chain is Phenylalanine--tRNA ligase alpha subunit from Lysinibacillus sphaericus (strain C3-41).